Here is a 423-residue protein sequence, read N- to C-terminus: Osteomodulin (423 aa).

The N-terminal stretch at 1–20 is a signal peptide; sequence MGCLRPIYVLFFCFVVRVYG. 6 positions are modified to sulfotyrosine: Tyr-22, Tyr-25, Tyr-31, Tyr-39, Tyr-51, and Tyr-77. Residues 53-91 enclose the LRRNT domain; sequence APFYQNILGCAKECFCPTNFPTSMYCDNRKLKTIPDIPM. 11 LRR repeats span residues 92–113, 116–129, 142–164, 165–184, 187–207, 213–233, 234–255, 258–279, 281–294, 301–322, and 331–353; these read HIQQ…SFIN, HLKE…KIKS, NLQQ…PKSL, ERLL…AMDG, NVTM…KGKI, KLMQ…GLPL, SLMY…YFQK, KLHA…IFNL, NLIE…KLKQ, NLEH…MMCP, and HLTY…IFFC. N-linked (GlcNAc...) asparagine glycosylation is found at Asn-113 and Asn-121. N-linked (GlcNAc...) asparagine glycosylation is present at Asn-187. Residues Asn-242 and Asn-278 are each glycosylated (N-linked (GlcNAc...) asparagine). Residue Asn-316 is glycosylated (N-linked (GlcNAc...) asparagine). Residues Cys-321 and Cys-353 are joined by a disulfide bond. The interval 383–408 is disordered; sequence YQDEEEEEEDDSQDHTLEGQEETEEH. Acidic residues predominate over residues 385 to 394; the sequence is DEEEEEEDDS. A sulfotyrosine mark is found at Tyr-413 and Tyr-414.

Belongs to the small leucine-rich proteoglycan (SLRP) family. SLRP class II subfamily. Binds the alpha(V)beta(3)-integrin. Post-translationally, glycosylated; contains keratan sulfate. In terms of tissue distribution, osteoblast and odontoblast. Expressed in femoral bone and calvaria tissues. Detected in femoral head, rib, tendon and bone marrow.

The protein resides in the secreted. It localises to the extracellular space. It is found in the extracellular matrix. May be implicated in biomineralization processes. Has a function in binding of osteoblasts via the alpha(V)beta(3)-integrin. The sequence is that of Osteomodulin (Omd) from Rattus norvegicus (Rat).